The following is a 194-amino-acid chain: Crossover junction endodeoxyribonuclease RuvC (194 aa).

Catalysis depends on residues Asp7, Glu68, and Asp141. Mg(2+)-binding residues include Asp7, Glu68, and Asp141. Residues 162–194 (GGEREQHLTAAQRQWAEAAQNSTRRRKNSDRGM) form a disordered region. Residues 184–194 (TRRRKNSDRGM) show a composition bias toward basic residues.

It belongs to the RuvC family. In terms of assembly, homodimer which binds Holliday junction (HJ) DNA. The HJ becomes 2-fold symmetrical on binding to RuvC with unstacked arms; it has a different conformation from HJ DNA in complex with RuvA. In the full resolvosome a probable DNA-RuvA(4)-RuvB(12)-RuvC(2) complex forms which resolves the HJ. Mg(2+) is required as a cofactor.

Its subcellular location is the cytoplasm. It catalyses the reaction Endonucleolytic cleavage at a junction such as a reciprocal single-stranded crossover between two homologous DNA duplexes (Holliday junction).. In terms of biological role, the RuvA-RuvB-RuvC complex processes Holliday junction (HJ) DNA during genetic recombination and DNA repair. Endonuclease that resolves HJ intermediates. Cleaves cruciform DNA by making single-stranded nicks across the HJ at symmetrical positions within the homologous arms, yielding a 5'-phosphate and a 3'-hydroxyl group; requires a central core of homology in the junction. The consensus cleavage sequence is 5'-(A/T)TT(C/G)-3'. Cleavage occurs on the 3'-side of the TT dinucleotide at the point of strand exchange. HJ branch migration catalyzed by RuvA-RuvB allows RuvC to scan DNA until it finds its consensus sequence, where it cleaves and resolves the cruciform DNA. The polypeptide is Crossover junction endodeoxyribonuclease RuvC (Bifidobacterium longum subsp. infantis (strain ATCC 15697 / DSM 20088 / JCM 1222 / NCTC 11817 / S12)).